Here is a 525-residue protein sequence, read N- to C-terminus: Chromosomal replication initiator protein DnaA (525 aa).

Residues 1–71 are domain I, interacts with DnaA modulators; it reads MNDFWQHCSA…SDLAREFWNT (71 aa). The segment at 71 to 188 is domain II; that stretch reads TPIEVQFVLD…GEADSMYERS (118 aa). The tract at residues 162–182 is disordered; it reads AGRRTWRPGPGAAPANGGEAD. Residues 169-181 show a composition bias toward low complexity; that stretch reads PGPGAAPANGGEA. The domain III, AAA+ region stretch occupies residues 189–405; sequence KLNPVLTFDN…GALRKILAYS (217 aa). ATP-binding residues include Gly-233, Gly-235, Lys-236, and Thr-237. The domain IV, binds dsDNA stretch occupies residues 406-525; the sequence is KFHGREISIE…LHVLEQTLKG (120 aa).

Belongs to the DnaA family. As to quaternary structure, oligomerizes as a right-handed, spiral filament on DNA at oriC.

It is found in the cytoplasm. Its function is as follows. Plays an essential role in the initiation and regulation of chromosomal replication. ATP-DnaA binds to the origin of replication (oriC) to initiate formation of the DNA replication initiation complex once per cell cycle. Binds the DnaA box (a 9 base pair repeat at the origin) and separates the double-stranded (ds)DNA. Forms a right-handed helical filament on oriC DNA; dsDNA binds to the exterior of the filament while single-stranded (ss)DNA is stabiized in the filament's interior. The ATP-DnaA-oriC complex binds and stabilizes one strand of the AT-rich DNA unwinding element (DUE), permitting loading of DNA polymerase. After initiation quickly degrades to an ADP-DnaA complex that is not apt for DNA replication. Binds acidic phospholipids. The protein is Chromosomal replication initiator protein DnaA of Burkholderia cenocepacia (strain HI2424).